Consider the following 318-residue polypeptide: Protein FdhE homolog (318 aa).

This sequence belongs to the FdhE family.

The protein resides in the cytoplasm. In terms of biological role, necessary for formate dehydrogenase activity. In Pseudomonas putida (strain ATCC 47054 / DSM 6125 / CFBP 8728 / NCIMB 11950 / KT2440), this protein is Protein FdhE homolog.